The primary structure comprises 70 residues: Sec-independent protein translocase protein TatA (70 aa).

A helical membrane pass occupies residues 1-21; sequence MAIGVNQLLIILVIIVLLFGA.

Belongs to the TatA/E family. The Tat system comprises two distinct complexes: a TatABC complex, containing multiple copies of TatA, TatB and TatC subunits, and a separate TatA complex, containing only TatA subunits. Substrates initially bind to the TatABC complex, which probably triggers association of the separate TatA complex to form the active translocon.

It localises to the cell inner membrane. In terms of biological role, part of the twin-arginine translocation (Tat) system that transports large folded proteins containing a characteristic twin-arginine motif in their signal peptide across membranes. TatA could form the protein-conducting channel of the Tat system. The sequence is that of Sec-independent protein translocase protein TatA from Campylobacter curvus (strain 525.92).